Reading from the N-terminus, the 294-residue chain is Shikimate dehydrogenase (NADP(+)) (294 aa).

Shikimate is bound by residues 23 to 25 (SRS) and threonine 70. Lysine 74 functions as the Proton acceptor in the catalytic mechanism. Shikimate contacts are provided by asparagine 95 and aspartate 110. NADP(+) is bound by residues 135–139 (GAGGA), 159–164 (NRTASR), and methionine 232. Tyrosine 234 lines the shikimate pocket. Glycine 255 provides a ligand contact to NADP(+).

It belongs to the shikimate dehydrogenase family. As to quaternary structure, homodimer.

The catalysed reaction is shikimate + NADP(+) = 3-dehydroshikimate + NADPH + H(+). It participates in metabolic intermediate biosynthesis; chorismate biosynthesis; chorismate from D-erythrose 4-phosphate and phosphoenolpyruvate: step 4/7. In terms of biological role, involved in the biosynthesis of the chorismate, which leads to the biosynthesis of aromatic amino acids. Catalyzes the reversible NADPH linked reduction of 3-dehydroshikimate (DHSA) to yield shikimate (SA). This chain is Shikimate dehydrogenase (NADP(+)), found in Cupriavidus pinatubonensis (strain JMP 134 / LMG 1197) (Cupriavidus necator (strain JMP 134)).